A 61-amino-acid chain; its full sequence is Photosystem II reaction center protein Z (61 aa).

Transmembrane regions (helical) follow at residues 5-25 and 38-58; these read LTAL…VALA and TKGF…DGVA.

It belongs to the PsbZ family. As to quaternary structure, PSII is composed of 1 copy each of membrane proteins PsbA, PsbB, PsbC, PsbD, PsbE, PsbF, PsbH, PsbI, PsbJ, PsbK, PsbL, PsbM, PsbT, PsbX, PsbY, PsbZ, Psb30/Ycf12, at least 3 peripheral proteins of the oxygen-evolving complex and a large number of cofactors. It forms dimeric complexes.

It localises to the plastid. The protein resides in the chloroplast thylakoid membrane. Functionally, may control the interaction of photosystem II (PSII) cores with the light-harvesting antenna, regulates electron flow through the 2 photosystem reaction centers. PSII is a light-driven water plastoquinone oxidoreductase, using light energy to abstract electrons from H(2)O, generating a proton gradient subsequently used for ATP formation. This chain is Photosystem II reaction center protein Z, found in Phaeodactylum tricornutum (strain CCAP 1055/1).